Reading from the N-terminus, the 61-residue chain is uncharacterized protein (61 aa).

The tract at residues 1–40 is disordered; it reads MRRGGEPQCDGREFRIASSPAREREDDNETAPPQTSAAQE. Residues 9-25 are compositionally biased toward basic and acidic residues; the sequence is CDGREFRIASSPARERE.

This is an uncharacterized protein from Caenorhabditis elegans.